An 82-amino-acid polypeptide reads, in one-letter code: Small ribosomal subunit protein bS16 (82 aa).

Belongs to the bacterial ribosomal protein bS16 family.

This chain is Small ribosomal subunit protein bS16, found in Vibrio atlanticus (strain LGP32) (Vibrio splendidus (strain Mel32)).